We begin with the raw amino-acid sequence, 142 residues long: Large ribosomal subunit protein uL13 (142 aa).

Belongs to the universal ribosomal protein uL13 family. Part of the 50S ribosomal subunit.

Functionally, this protein is one of the early assembly proteins of the 50S ribosomal subunit, although it is not seen to bind rRNA by itself. It is important during the early stages of 50S assembly. The protein is Large ribosomal subunit protein uL13 of Proteus mirabilis (strain HI4320).